Reading from the N-terminus, the 133-residue chain is Pheromone-regulated membrane protein 3 (133 aa).

Residues 1-104 lie on the Nuclear side of the membrane; that stretch reads MTAMKEDNAA…SKVQRENKGS (104 aa). A disordered region spans residues 36–100; that stretch reads ADGFVINKAK…DASESKVQRE (65 aa). The Bipartite nuclear localization signal signature appears at 69-75; that stretch reads GRVRKHK. Over residues 90-100 the composition is skewed to basic and acidic residues; it reads KDASESKVQRE. The helical transmembrane segment at 105 to 127 threads the bilayer; the sequence is FYQGAIFGSFLGAAVTTVLSNLA. Residues 128 to 133 are Perinuclear space-facing; the sequence is VKALQN.

In terms of assembly, interacts with KAR5.

It is found in the nucleus outer membrane. Its subcellular location is the cytoplasm. It localises to the cytoskeleton. The protein localises to the microtubule organizing center. The protein resides in the spindle pole body. Required for the fusion of nuclear envelopes during mating, ensuring proper karyogamy. Plays a role in the initiation of outer nuclear envelope fusion. This Saccharomyces cerevisiae (strain ATCC 204508 / S288c) (Baker's yeast) protein is Pheromone-regulated membrane protein 3 (PRM3).